A 763-amino-acid chain; its full sequence is Phosphoglycerol transferase I (763 aa).

Helical transmembrane passes span 1–21 (MSEL…AWKA), 26–46 (WWFA…ITLF), 77–97 (ILPG…LGWI), and 108–128 (FGYS…SPAF).

It belongs to the OpgB family.

The protein resides in the cell inner membrane. The catalysed reaction is a phosphatidylglycerol + a membrane-derived-oligosaccharide D-glucose = a 1,2-diacyl-sn-glycerol + a membrane-derived-oligosaccharide 6-(glycerophospho)-D-glucose.. It participates in glycan metabolism; osmoregulated periplasmic glucan (OPG) biosynthesis. Functionally, transfers a phosphoglycerol residue from phosphatidylglycerol to the membrane-bound nascent glucan backbones. The chain is Phosphoglycerol transferase I from Escherichia coli (strain SE11).